The chain runs to 953 residues: Vacuolar membrane protease (953 aa).

Over 1 to 16 (MDQTKPPRRNPLAFTP) the chain is Cytoplasmic. A helical membrane pass occupies residues 17–37 (WPVTLITAVVYLAFVIPLLVI). The Vacuolar segment spans residues 38–382 (HHVVPSAPTS…TFVLFRLHTL (345 aa)). N-linked (GlcNAc...) asparagine glycans are attached at residues Asn53 and Asn115. 2 residues coordinate Zn(2+): His165 and Asp177. Glu211 serves as the catalytic Proton acceptor. Positions 212, 237, and 310 each coordinate Zn(2+). Residues 383–403 (FALSVTLLVVAPIVLLLTSII) traverse the membrane as a helical segment. Over 404–437 (LTKVDKMYLFRTSIRPEGSLEVLPLYGDRGVIRY) the chain is Cytoplasmic. A helical membrane pass occupies residues 438-458 (PFLLGIPTAVTIGLAYLLTKF). The Vacuolar segment spans residues 459-464 (NPYIVH). The helical transmembrane segment at 465 to 485 (SSQYAVWSMMVSVWIFLAWFV) threads the bilayer. Topologically, residues 486-499 (SRVADFARPSAFHR) are cytoplasmic. A helical transmembrane segment spans residues 500–520 (VYTLTWTFVVMWVLQVIATVY). At 521 to 524 (QDRW) the chain is on the vacuolar side. A helical transmembrane segment spans residues 525–545 (ALGGSYFIFFAYAGTFLATWI). Topologically, residues 546–650 (SYLELFALPR…SLPKWLWLLQ (105 aa)) are cytoplasmic. The segment at 570-599 (ASSHSSRRGLSEEDEEDEDEAPTESTSLLG) is disordered. Positions 581-591 (EEDEEDEDEAP) are enriched in acidic residues. A helical transmembrane segment spans residues 651 to 671 (FLLAAPIVLILVGPIALLLTG). The Vacuolar segment spans residues 672-684 (SLHQTGQDGSSSL). Residues 685–705 (FIYIAIVALTTLLLSPMLPFV) form a helical membrane-spanning segment. Topologically, residues 706-711 (HRCTYH) are cytoplasmic. Residues 712–732 (IPLFMLAVFAGTLIYNLVAFP) form a helical membrane-spanning segment. At 733–953 (FSDSNRLKLF…VEGRKSFEIA (221 aa)) the chain is on the vacuolar side. Asn779 carries an N-linked (GlcNAc...) asparagine glycan.

This sequence belongs to the peptidase M28 family. Zn(2+) is required as a cofactor.

Its subcellular location is the vacuole membrane. Its function is as follows. May be involved in vacuolar sorting and osmoregulation. The chain is Vacuolar membrane protease from Emericella nidulans (strain FGSC A4 / ATCC 38163 / CBS 112.46 / NRRL 194 / M139) (Aspergillus nidulans).